The chain runs to 680 residues: PAN2-PAN3 deadenylation complex subunit PAN3 (680 aa).

Disordered stretches follow at residues 1-26 (MATTRYNSNDFRRQLGSPRPKGRADT), 51-87 (HDQTKKSPKPDATTRKTLNVDSAPFTPAVSSQPSKKT), and 99-120 (FTPRATAATPTGTPTAQETDIP). The C3H1-type zinc-finger motif lies at 25–54 (DTKDTLCRNILIYGHCRYEDAGCAFNHDQT). Over residues 52-64 (DQTKKSPKPDATT) the composition is skewed to basic and acidic residues. Residues 62-82 (ATTRKTLNVDSAPFTPAVSSQ) carry the PABPC-interacting motif-2 (PAM-2) motif. Residues 99–117 (FTPRATAATPTGTPTAQET) are compositionally biased toward low complexity. Residues 256-522 (QTMTGTAALQ…TVKNLVAGIN (267 aa)) form a pseudokinase domain region. Residues Arg311, 360–367 (EYYPLAET), and 422–423 (TK) each bind ATP. Positions 523 to 561 (EHVMTAFDAQQRQSDMLYSELYREVENGRVLRLLMKLAT) form a coiled coil. Residues 562–680 (INERTEYDKD…VHHPSHRDRF (119 aa)) form a knob domain region. The segment covering 655-669 (SGNGRGGPVASGSGH) has biased composition (gly residues). A disordered region spans residues 655-680 (SGNGRGGPVASGSGHGVHHPSHRDRF). A compositionally biased stretch (basic residues) spans 670–680 (GVHHPSHRDRF).

This sequence belongs to the protein kinase superfamily. PAN3 family. As to quaternary structure, homodimer. Forms a heterotrimer with a catalytic subunit PAN2 to form the poly(A)-nuclease (PAN) deadenylation complex. Interacts (via PAM-2 motif) with poly(A)-binding protein PAB1 (via PABC domain), conferring substrate specificity of the enzyme complex.

The protein resides in the cytoplasm. In terms of biological role, regulatory subunit of the poly(A)-nuclease (PAN) deadenylation complex, one of two cytoplasmic mRNA deadenylases involved in mRNA turnover. PAN specifically shortens poly(A) tails of RNA and the activity is stimulated by poly(A)-binding protein PAB1. PAN deadenylation is followed by rapid degradation of the shortened mRNA tails by the CCR4-NOT complex. Deadenylated mRNAs are then degraded by two alternative mechanisms, namely exosome-mediated 3'-5' exonucleolytic degradation, or deadenylation-dependent mRNA decaping and subsequent 5'-3' exonucleolytic degradation by XRN1. May also be involved in post-transcriptional maturation of mRNA poly(A) tails. PAN3 acts as a positive regulator for PAN activity, recruiting the catalytic subunit PAN2 to mRNA via its interaction with RNA and with PAB1. This is PAN2-PAN3 deadenylation complex subunit PAN3 from Pyricularia oryzae (strain 70-15 / ATCC MYA-4617 / FGSC 8958) (Rice blast fungus).